The sequence spans 303 residues: Coenzyme PQQ synthesis protein B (303 aa).

This sequence belongs to the PqqB family.

It participates in cofactor biosynthesis; pyrroloquinoline quinone biosynthesis. Functionally, may be involved in the transport of PQQ or its precursor to the periplasm. This chain is Coenzyme PQQ synthesis protein B, found in Pseudomonas fluorescens (strain Pf0-1).